Reading from the N-terminus, the 269-residue chain is MTGLLDGKRILVSGIITDSSIAFHIARVAQEQGAQLVLTGFDRLRLIQRITDRLPAKAPLLELDVQNEEHLASLAGRVTEAIGAGNKLDGVVHSIGFMPQTGMGINPFFDAPYADVSKGIHISAYSYASMAKALLPIMNPGGSIVGMDFDPSRAMPAYNWMTVAKSALESVNRFVAREAGKYGVRSNLVAAGPIRTLAMSAIVGGALGEEAGAQIQLLEEGWDQRAPIGWNMKDATPVAKTVCALLSDWLPATTGDIIYADGGAHTQLL.

NAD(+)-binding positions include serine 20–isoleucine 21, aspartate 64–valine 65, and isoleucine 95–glycine 96. Tyrosine 158 provides a ligand contact to substrate. Residues lysine 165 and isoleucine 194 each coordinate NAD(+).

It belongs to the short-chain dehydrogenases/reductases (SDR) family. FabI subfamily. As to quaternary structure, homodimer. Homotetramer.

The enzyme catalyses a 2,3-saturated acyl-[ACP] + NAD(+) = a (2E)-enoyl-[ACP] + NADH + H(+). The catalysed reaction is a 2,3-saturated acyl-CoA + NAD(+) = a (2E)-enoyl-CoA + NADH + H(+). Its pathway is lipid metabolism; mycolic acid biosynthesis. Its function is as follows. Enoyl-ACP reductase of the type II fatty acid syntase (FAS-II) system, which is involved in the biosynthesis of mycolic acids, a major component of mycobacterial cell walls. Catalyzes the NADH-dependent reduction of the double bond of 2-trans-enoyl-[acyl-carrier protein], an essential step in the fatty acid elongation cycle of the FAS-II pathway. Shows preference for long-chain fatty acyl thioester substrates, and can also use 2-trans-enoyl-CoAs as alternative substrates. The mycobacterial FAS-II system utilizes the products of the FAS-I system as primers to extend fatty acyl chain lengths up to C56, forming the meromycolate chain that serves as the precursor for final mycolic acids. In terms of biological role, is the primary target of the first-line antitubercular drug isoniazid (INH) and of the second-line drug ethionamide (ETH). Overexpressed inhA confers INH and ETH resistance to M.bovis. The mechanism of isoniazid action against InhA is covalent attachment of the activated form of the drug to the nicotinamide ring of NAD and binding of the INH-NAD adduct to the active site of InhA. Similarly, the ETH-NAD adduct binds InhA. This Mycobacterium bovis (strain ATCC BAA-935 / AF2122/97) protein is Enoyl-[acyl-carrier-protein] reductase [NADH].